The sequence spans 318 residues: Taste receptor type 2 member 60 (318 aa).

The Extracellular segment spans residues Met1–Val7. Residues Leu8–Arg28 form a helical membrane-spanning segment. Residues Leu29–Ala40 are Cytoplasmic-facing. Residues Ala41–Ser61 form a helical membrane-spanning segment. Topologically, residues Leu62–Pro88 are extracellular. The helical transmembrane segment at Tyr89–Trp109 threads the bilayer. At Ser110–Pro128 the chain is on the cytoplasmic side. The helical transmembrane segment at Val129–Val149 threads the bilayer. At Gly150 to Asp183 the chain is on the extracellular side. Asn179 carries an N-linked (GlcNAc...) asparagine glycan. A helical transmembrane segment spans residues Ser184 to Met204. Residues Pro205 to Phe234 are Cytoplasmic-facing. The helical transmembrane segment at Arg235–Leu255 threads the bilayer. Topologically, residues Phe256 to Val264 are extracellular. Residues Phe265–Ile285 form a helical membrane-spanning segment. Residues Tyr286–Pro318 are Cytoplasmic-facing.

The protein belongs to the G-protein coupled receptor T2R family. In terms of tissue distribution, expressed in subsets of taste receptor cells of the tongue and exclusively in gustducin-positive cells.

It is found in the membrane. Functionally, receptor that may play a role in the perception of bitterness and is gustducin-linked. May play a role in sensing the chemical composition of the gastrointestinal content. The activity of this receptor may stimulate alpha gustducin, mediate PLC-beta-2 activation and lead to the gating of TRPM5. In Homo sapiens (Human), this protein is Taste receptor type 2 member 60 (TAS2R60).